The sequence spans 358 residues: Probable (S)-tetrahydroprotoberberine N-methyltransferase 2 (358 aa).

Positions 98, 136, 160, 164, 186, 187, and 202 each coordinate S-adenosyl-L-methionine. Residue Cys-333 is part of the active site.

It belongs to the CFA/CMAS family. In terms of assembly, homodimer.

Its subcellular location is the cytoplasm. The catalysed reaction is (S)-stylopine + S-adenosyl-L-methionine = (S)-cis-N-methylstylopine + S-adenosyl-L-homocysteine. The enzyme catalyses (S)-tetrahydropalmatine + S-adenosyl-L-methionine = (S)-cis-N-methyltetrahydropalmatine + S-adenosyl-L-homocysteine. The protein operates within alkaloid biosynthesis. Its function is as follows. N-methyltransferase with a strict substrate specificity for (R,S)-tetrahydropalmatine or (R,S)-stylopine. This chain is Probable (S)-tetrahydroprotoberberine N-methyltransferase 2, found in Papaver bracteatum (Great scarlet poppy).